A 423-amino-acid polypeptide reads, in one-letter code: uncharacterized protein (423 aa).

This sequence belongs to the asfivirus E423R family.

It is found in the virion. This is an uncharacterized protein from Ornithodoros (relapsing fever ticks).